The following is a 261-amino-acid chain: Taurine import ATP-binding protein TauB (261 aa).

The ABC transporter domain maps to 4-233; sequence LQLEGIGAHY…RYSAGESARA (230 aa). 38–45 contributes to the ATP binding site; that stretch reads GPSGSGKT.

It belongs to the ABC transporter superfamily. Taurine importer (TC 3.A.1.17.1) family. In terms of assembly, the complex is composed of two ATP-binding proteins (TauB), two transmembrane proteins (TauC) and a solute-binding protein (TauA).

The protein localises to the cell inner membrane. The catalysed reaction is taurine(out) + ATP + H2O = taurine(in) + ADP + phosphate + H(+). In terms of biological role, part of the ABC transporter complex TauABC involved in taurine import. Responsible for energy coupling to the transport system. This is Taurine import ATP-binding protein TauB from Pseudomonas syringae pv. tomato (strain ATCC BAA-871 / DC3000).